Reading from the N-terminus, the 1180-residue chain is DNA-directed RNA polymerase subunit beta (1180 aa).

The span at 1154-1164 (EMKELDDEDEQ) shows a compositional bias: acidic residues. Residues 1154-1180 (EMKELDDEDEQASDKLNLNIDSTESNV) are disordered. Residues 1167 to 1180 (DKLNLNIDSTESNV) show a composition bias toward polar residues.

This sequence belongs to the RNA polymerase beta chain family. The RNAP catalytic core consists of 2 alpha, 1 beta, 1 beta' and 1 omega subunit. When a sigma factor is associated with the core the holoenzyme is formed, which can initiate transcription.

It catalyses the reaction RNA(n) + a ribonucleoside 5'-triphosphate = RNA(n+1) + diphosphate. In terms of biological role, DNA-dependent RNA polymerase catalyzes the transcription of DNA into RNA using the four ribonucleoside triphosphates as substrates. In Halalkalibacterium halodurans (strain ATCC BAA-125 / DSM 18197 / FERM 7344 / JCM 9153 / C-125) (Bacillus halodurans), this protein is DNA-directed RNA polymerase subunit beta.